We begin with the raw amino-acid sequence, 142 residues long: Large ribosomal subunit protein uL11 (142 aa).

The protein belongs to the universal ribosomal protein uL11 family. Part of the ribosomal stalk of the 50S ribosomal subunit. Interacts with L10 and the large rRNA to form the base of the stalk. L10 forms an elongated spine to which L12 dimers bind in a sequential fashion forming a multimeric L10(L12)X complex. Post-translationally, one or more lysine residues are methylated.

Its function is as follows. Forms part of the ribosomal stalk which helps the ribosome interact with GTP-bound translation factors. This is Large ribosomal subunit protein uL11 from Pseudoalteromonas atlantica (strain T6c / ATCC BAA-1087).